The chain runs to 377 residues: Histidinol-phosphate aminotransferase (377 aa).

Residue Lys230 is modified to N6-(pyridoxal phosphate)lysine.

This sequence belongs to the class-II pyridoxal-phosphate-dependent aminotransferase family. Histidinol-phosphate aminotransferase subfamily. Homodimer. Pyridoxal 5'-phosphate serves as cofactor.

It carries out the reaction L-histidinol phosphate + 2-oxoglutarate = 3-(imidazol-4-yl)-2-oxopropyl phosphate + L-glutamate. Its pathway is amino-acid biosynthesis; L-histidine biosynthesis; L-histidine from 5-phospho-alpha-D-ribose 1-diphosphate: step 7/9. In Mycobacterium leprae (strain Br4923), this protein is Histidinol-phosphate aminotransferase.